The primary structure comprises 98 residues: Complement inhibitor RaCI1 (98 aa).

A signal peptide spans methionine 1–threonine 20. 3 disulfides stabilise this stretch: cysteine 33–cysteine 57, cysteine 38–cysteine 59, and cysteine 53–cysteine 74. The disordered stretch occupies residues threonine 79 to asparagine 98. Positions aspartate 88–asparagine 98 are enriched in basic and acidic residues.

The protein belongs to the RaCI family. In terms of tissue distribution, expressed in salivary glands.

Its subcellular location is the secreted. Its function is as follows. Complement inhibitor. Prevents complement-mediated C5 activation by binding to C5. Binds C5 at a different binding site than the other tick complement inhibitors OmCI and CirpT1, and the drug eculizumab. Inhibits the complement in human and guinea pig but not in other species tested (rabbit, rat, mouse, and pig). The chain is Complement inhibitor RaCI1 from Rhipicephalus appendiculatus (Brown ear tick).